Reading from the N-terminus, the 1249-residue chain is Apoptotic protease-activating factor 1 (1249 aa).

A CARD domain is found at 1–90 (MDAKARNCLL…KDLAGLLHSG (90 aa)). The 310-residue stretch at 106–415 (NTSFVRTVLC…LETEEVEDIL (310 aa)) folds into the NB-ARC domain. Residues 154–161 (GMAGCGKS) and Arg-265 contribute to the ATP site. Residues 613 to 652 (PHTDAVYHACFSQDGQRIASCGADKTLQVFKAETGEKLLD) form a WD 1-1 repeat. The WD 1-2 repeat unit spans residues 655-694 (AHEDEVLCCAFSSDDSYIATCSVDKKVKIWDSGTGKLVHT). One copy of the WD 1-3 repeat lies at 697–738 (EHSEQVNCCHFTNKSNHLLLATGSNDSFLKLWDLNQKECRNT). The WD 1-4 repeat unit spans residues 741-780 (GHTNSVTHCRFSPDDELLASCSADGTLKLWDVRSANEKKS). One copy of the WD 1-5 repeat lies at 796–837 (DVEVIVKCCSWSADGDRIIVAAKNKVLLLDIHTSGLLTEIHT). Residues 838–877 (GHHSTIQYCDFSPYDHLAVIALSQYCVELWNIDSRVKVAD) form a WD 1-6 repeat. The WD 1-7 repeat unit spans residues 880 to 910 (GHLSWVHGVMFSPDGSSFLTASDDQTIRVWE). Residues 910–921 (ETRKVCKNSAIV) are interpropeller linker. A WD 2-1 repeat occupies 922 to 958 (LKQEIDVVFQENEMMVLAVDNIRGLQLIAGKTGQIDY). The WD 2-2 repeat unit spans residues 959–998 (LPEAQVSCCCLSPHLEYVAFGDEEGAIKIIELPNNRVFSS). The WD 2-3 repeat unit spans residues 1001-1040 (GHKKAVRHIQFTADGKTLISSSEDSVIQVWNWQTEEYVFL). Residues 1042–1080 (AHQETVKDFRLLRDSRLLSWSFDGTVKVWNVITGRIERD) form a WD 2-4 repeat. One copy of the WD 2-5 repeat lies at 1083–1122 (CHQGTVLSCAISSDATKFSSTSADKTAKIWSFELPSPLHE). One copy of the WD 2-6 repeat lies at 1125–1164 (GHNSCVRCSAFSLDGILLATGDDNGEIRIWNVSDGQLLHL). A WD 2-7 repeat occupies 1176–1213 (THGGWVTDVCFSPDRKMLVSAGGYLKWWNVVTGESSQT). One copy of the WD 2-8 repeat lies at 1214 to 1249 (FYTNGTNLKKIHVSPDFRTYVTVDNLGILYILQVLE).

In terms of assembly, monomer. Oligomerizes to a heptameric ring, known as the apoptosome, upon binding of cytochrome c and dATP. Oligomeric Apaf-1 and pro-caspase-9 bind to each other via their respective NH2-terminal CARD domains. Interacts with UACA. Interacts with APIP. Interacts (via CARD and NACHT domains) with NAIP/BIRC1 (via NACHT domain). Interacts with CIAO2A.

The protein localises to the cytoplasm. In terms of biological role, regulates programmed cell death; necessary for normal brain development. Participates with pro-caspase-9 (Apaf-3) in the cytochrome c-dependent activation of caspase-3, leading to apoptosis. This activation requires ATP. This chain is Apoptotic protease-activating factor 1 (Apaf1), found in Rattus norvegicus (Rat).